The chain runs to 807 residues: cAMP-regulated phosphoprotein 21 (807 aa).

The segment at methionine 1–proline 127 is disordered. Position 2 is an N-acetylserine (serine 2). A Phosphoserine modification is found at serine 32. The stretch at serine 32–serine 57 forms a coiled coil. The residue at position 55 (serine 55) is a Phosphoserine; by PKA. Over residues isoleucine 89 to serine 98 the composition is skewed to polar residues. Basic and acidic residues predominate over residues glutamate 101 to proline 127. Phosphoserine is present on serine 133. Positions arginine 163–threonine 226 constitute an R3H domain. The SUZ domain maps to arginine 227–serine 298. A disordered region spans residues serine 245 to arginine 282. Phosphoserine occurs at positions 265 and 298. 4 disordered regions span residues leucine 328–valine 434, glycine 474–methionine 536, serine 552–serine 576, and glutamine 595–proline 627. The span at glycine 337–glutamate 348 shows a compositional bias: low complexity. Residues threonine 349–arginine 358 show a composition bias toward basic and acidic residues. The segment covering alanine 359 to alanine 380 has biased composition (polar residues). 2 positions are modified to phosphoserine: serine 361 and serine 381. Positions glycine 401 to serine 421 are enriched in low complexity. Over residues arginine 422 to valine 434 the composition is skewed to polar residues. Pro residues predominate over residues glutamine 514 to glutamine 524. Low complexity predominate over residues proline 525–glutamine 535. 2 stretches are compositionally biased toward polar residues: residues serine 552–aspartate 563 and glutamine 595–leucine 613. Residue serine 557 is modified to Phosphoserine. Asymmetric dimethylarginine is present on arginine 650.

Interacts with CALM1. Phosphorylation of isoform 2 at Ser-55 is enhanced upon dopamine D1 receptor activation and favors interaction with CALM1. Post-translationally, methylated by CARM1 at Arg-650 in immature thymocytes. Present at high levels in thymus and low levels in brain. In thymus, isoform 1 is specifically found in immature thymocytes (at protein level).

The protein resides in the cytoplasm. In terms of biological role, may act as a competitive inhibitor of calmodulin-dependent enzymes such as calcineurin in neurons. The polypeptide is cAMP-regulated phosphoprotein 21 (Arpp21) (Mus musculus (Mouse)).